The chain runs to 417 residues: Phosphoglycerate kinase 1 (417 aa).

(2R)-3-phosphoglycerate contacts are provided by Val23, Asp24, Phe25, Asn26, Asn38, Arg39, Ser62, His63, Gly65, Arg66, Leu121, Arg122, His168, and Arg169. Gly212 is a binding site for ADP. Gly212 is a CDP binding site. The AMP site is built by Ala213 and Lys214. ATP is bound at residue Ala213. Ala213 lines the Mg(2+) pocket. Asp217 contacts CDP. A Mg(2+)-binding site is contributed by Asp217. Lys218 serves as a coordination point for AMP. Lys218 is an ATP binding site. Gly236 serves as a coordination point for ADP. Gly236 provides a ligand contact to CDP. Residues Gly237 and Gly311 each contribute to the AMP site. ATP contacts are provided by Gly237 and Gly311. 2 residues coordinate CDP: Gly336 and Phe341. Phe341 is a binding site for ADP. Glu342 is an AMP binding site. ATP is bound by residues Glu342, Asp374, and Thr375. A Mg(2+)-binding site is contributed by Asp374.

It belongs to the phosphoglycerate kinase family. As to quaternary structure, monomer. The cofactor is Mg(2+).

It localises to the cytoplasm. The protein resides in the mitochondrion. It carries out the reaction (2R)-3-phosphoglycerate + ATP = (2R)-3-phospho-glyceroyl phosphate + ADP. It participates in carbohydrate degradation; glycolysis; pyruvate from D-glyceraldehyde 3-phosphate: step 2/5. In terms of biological role, catalyzes one of the two ATP producing reactions in the glycolytic pathway via the reversible conversion of 1,3-diphosphoglycerate to 3-phosphoglycerate. Both L- and D- forms of purine and pyrimidine nucleotides can be used as substrates, but the activity is much lower on pyrimidines. Negatively regulates the biosynthesis of acetyl-CoA from pyruvate in the mitochondrion. The chain is Phosphoglycerate kinase 1 (PGK1) from Rhizopus niveus.